The chain runs to 543 residues: MSMFCYQCQETAMGTGCTLKGVCGKTSEVANLQDLLLFVVRGIAVYNEHLRREGHPSEEADKFIYDALFITITNANFDKAAIIRKIKEGLQLKNELASKVTIANAPDECLWDGNEDEFEEKARTVGVLRTPDEDIRSLKELVHYGLKGMAAYVEHAHNLGYQSPEIFAFMQSALAELTRNDITMEELVQLTLATGKHGVSAMAQLDAANTNSYGNPEISEVNLGVRNNPGILISGHDLKDLEELLEQTEGTGIDIYTHSEMLPAHYYPQLKKYKHLAGNYGNAWWKQKEEFESFNGPILFTSNCIVPPRANASYKDRIYITGACGLEGAHYIPERKDGKPKDFSALIAHAKQCQPPTAIESGTLIGGFAHAQVVALADKVVEAVKSGAIRKFFVMAGCDGRMKSREYYTEFAEKLPKDTVILTAGCAKYRYNKLALGDINGIPRVLDAGQCNDSYSLAVIALKLKEVFGLDDVNKLPIVYNIAWYEQKAVIVLLALLALGVKNIHLGPTLPAFLSPNVKNVLIEQFGIGGISTADEDIMKFLS.

[4Fe-4S] cluster-binding residues include C5, C8, C17, and C23. Residues H236, E260, C304, C398, C426, C451, E486, and K488 each coordinate hybrid [4Fe-2O-2S] cluster. C398 is subject to Cysteine persulfide.

The protein belongs to the HCP family. [4Fe-4S] cluster is required as a cofactor. It depends on hybrid [4Fe-2O-2S] cluster as a cofactor.

It is found in the cytoplasm. It catalyses the reaction A + NH4(+) + H2O = hydroxylamine + AH2 + H(+). Functionally, catalyzes the reduction of hydroxylamine to form NH(3) and H(2)O. The chain is Hydroxylamine reductase from Bacteroides thetaiotaomicron (strain ATCC 29148 / DSM 2079 / JCM 5827 / CCUG 10774 / NCTC 10582 / VPI-5482 / E50).